The chain runs to 417 residues: Probable sugar-binding periplasmic protein (417 aa).

Positions Met-1–Ala-21 are cleaved as a signal peptide.

The protein belongs to the bacterial solute-binding protein 1 family.

The protein resides in the periplasm. In terms of biological role, part of a binding-protein-dependent transport system for a sugar. The sequence is that of Probable sugar-binding periplasmic protein from Mesorhizobium japonicum (strain LMG 29417 / CECT 9101 / MAFF 303099) (Mesorhizobium loti (strain MAFF 303099)).